The following is a 622-amino-acid chain: Chaperone protein HscA homolog (622 aa).

It belongs to the heat shock protein 70 family.

Functionally, chaperone involved in the maturation of iron-sulfur cluster-containing proteins. Has a low intrinsic ATPase activity which is markedly stimulated by HscB. The sequence is that of Chaperone protein HscA homolog from Azoarcus sp. (strain BH72).